The following is a 398-amino-acid chain: MATVEELKLRIRELENELIKSKQKQSDAEHNIRPKIEQMSAEVVDSNPYSRLMALKRMGIVQDYEKIRSFAVAVVGVGGVGSVTAEMLTRCGIGKLLLFDYDKVELANMNRLFFQPHQAGLSKVEAAQHTLRNINPDVAFETHNYNITTMDNFTHFMDRVSHGGLEEGKPVDLILSCVDNFEARMAINTACNELGQIWMESGVSENAVSGHIQLIIPGETACFACAPPLVVAANIDEKTLKRDGVCAASLPTTMGVVAGLLVQNVLKYLLGFGTVSYYLGYNAMQDFFPSMAMKANPQCDDRHCRRQQDEYKKKEAERPKQEVVQEEEEVVHEDNEWGIELVSEVTEAELQDASGPIPDLPEGITVAYTIPEKDGGSGETVEETEQSLEELMAQMKKI.

ATP-binding residues include glycine 79, aspartate 100, lysine 123, asparagine 146, and asparagine 180. Zn(2+)-binding residues include cysteine 222 and cysteine 225. The active-site Glycyl thioester intermediate is the cysteine 246. Positions 299 and 304 each coordinate Zn(2+). Positions 330–342 (VVHEDNEWGIELV) match the UFM1-interacting sequence (UIS) motif. The tract at residues 343–373 (SEVTEAELQDASGPIPDLPEGITVAYTIPEK) is linker. Residues 383–398 (ETEQSLEELMAQMKKI) carry the UFC1-binding sequence (UFC) motif.

The protein belongs to the ubiquitin-activating E1 family. UBA5 subfamily. In terms of assembly, homodimer; homodimerization is required for ufm1 activation. Interacts (via UIS motif) with ufm1; binds ufm1 via a trans-binding mechanism in which ufm1 interacts with distinct sites in both subunits of the uba5 homodimer. Interacts (via C-terminus) with ufc1.

The protein resides in the cytoplasm. It is found in the nucleus. The protein localises to the endoplasmic reticulum membrane. It localises to the golgi apparatus. Its function is as follows. E1-like enzyme which specifically catalyzes the first step in ufmylation. Activates ufm1 by first adenylating its C-terminal glycine residue with ATP, and thereafter linking this residue to the side chain of a cysteine residue in E1, yielding a ufm1-E1 thioester and free AMP. Activates ufm1 via a trans-binding mechanism, in which ufm1 interacts with distinct sites in both subunits of the uba5 homodimer. Trans-binding also promotes stabilization of the uba5 homodimer, and enhances ATP-binding. Transfer of ufm1 from uba5 to the E2-like enzyme UFC1 also takes place using a trans mechanism. Ufmylation plays a key role in various processes, such as ribosome recycling, response to DNA damage, interferon response or reticulophagy (also called ER-phagy). This Danio rerio (Zebrafish) protein is Ubiquitin-like modifier-activating enzyme 5.